Reading from the N-terminus, the 289-residue chain is N-methyltransferase FrzE (289 aa).

It belongs to the methyltransferase superfamily.

The enzyme catalyses (1S,4S)-4-[(4-hydroxyphenyl)methyl]-2,5-diazaspiro[bicyclo[3.2.1]octane-6,1'-cyclohexan]-4'-one + S-adenosyl-L-methionine = (1S,4S)-4-[(4-hydroxyphenyl)methyl]-2-methyl-2,5-diazaspiro[bicyclo[3.2.1]octane-6,1'-cyclohexan]-4'-one + S-adenosyl-L-homocysteine + H(+). The catalysed reaction is (1S,4S)-4-[(4-methoxyphenyl)methyl]-2,5-diazaspiro[bicyclo[3.2.1]octane-6,1'-cyclohexan]-4'-one + S-adenosyl-L-methionine = (1S,4S)-4-[(4-methoxyphenyl)methyl]-2-methyl-2,5-diazaspiro[bicyclo[3.2.1]octane-6,1'-cyclohexan]-4'-one + S-adenosyl-L-homocysteine + H(+). Its pathway is secondary metabolite biosynthesis. N-methyltransferase; part of the gene cluster that mediates the biosynthesis of the alkaloid (-)-FR901483, a potent immunosuppressant that shows efficacy in animal models and a probable inhibitor of purine nucleotide biosynthesis by targeting phosphoribosylpyrophosphate amidotransferase (PPAT). Within the pathway, FrzE methylates the amine at position C10'. The biosynthesis of (-)-FR901483 starts with the condensation of two L-tyrosines to yield (S,S)-dityrosyl-piperazine. This process occurs in 3 steps with the non-canonical nonribosomal peptide synthetase FrzA catalyzing the reduction of L-tyrosine into L-tyrosinal, the spontaneous condensation of 2 L-tyrosinal units, and the subsequent reduction by the NmrA-like family domain-containing oxidoreductase FrzB. The cytochrome P450 monooxygenase FrzC then performs coupling between N10 and C1' to morph the piperazine into a 1,4-diazabicyclo[3.2.1]octane spiro-fused to a 2,5-cyclohexadienone. The dienone portion is further reduced to cyclohexanone by the flavin-dependent reductase FrzD. The methyltranserases (MTs) FrzE and FrzF are then involved in the methylation at the C10' amine and the C4 phenolic oxygen, respectively. The order of the two MTs appear to be interchangeable. Cleavage of the C9-N10' bond by the dioxygenase FrzG then leads to formation of a conjugated iminium. In addition to the oxidation of C9, an additional dehydrogenation between C7 and C8 can occur to give a likely shunt product. The next biosynthetic step is the intramolecular aldol condensation catalyzed by the newly identified aldolase FrzH to yield an aza-tricyclic product with the formation of a C9-C3' bond. The short-chain dehydrogenase/reductase FrzI then produces dephospho-(-)-FR901483 that is phosphorylated at C4'-OH into (-)-FR901483 by the phosphotransferase FrzJ. This is N-methyltransferase FrzE from Cladobotryum sp.